We begin with the raw amino-acid sequence, 513 residues long: EGF-like domain-containing protein 1 (513 aa).

The first 21 residues, 1–21 (MMHTFLRRLCVVALCLGYIKA), serve as a signal peptide directing secretion. In terms of domain architecture, EGF-like spans 72–108 (PTALCGPPCLNGGECYEPTVGTYMCMCPEAFYGNKCE). 3 disulfides stabilise this stretch: cysteine 76-cysteine 86, cysteine 80-cysteine 96, and cysteine 98-cysteine 107. Positions 115-364 (ECSGTEITIN…TSCDSVVCPS (250 aa)) constitute a ZP domain. Positions 356-411 (SCDSVVCPSPPQSVPSNPQNIPPANPQNIPPANPQNIPPANPQISPSSSQRKRRAA) are disordered. Over residues 375-396 (NIPPANPQNIPPANPQNIPPAN) the composition is skewed to pro residues. Residues asparagine 438 and asparagine 503 are each glycosylated (N-linked (GlcNAc...) asparagine).

As to expression, component of the acid-insoluble organic matrix of calcified layers of the shell (at protein level).

It is found in the secreted. In Lottia gigantea (Giant owl limpet), this protein is EGF-like domain-containing protein 1.